A 227-amino-acid polypeptide reads, in one-letter code: ATP synthase F(0) complex subunit a (227 aa).

The next 6 helical transmembrane spans lie at F14 to P34, L73 to F93, Q98 to M118, A137 to L157, V179 to L199, and L203 to L223.

The protein belongs to the ATPase A chain family. Component of the ATP synthase complex composed at least of ATP5F1A/subunit alpha, ATP5F1B/subunit beta, ATP5MC1/subunit c (homooctomer), MT-ATP6/subunit a, MT-ATP8/subunit 8, ATP5ME/subunit e, ATP5MF/subunit f, ATP5MG/subunit g, ATP5MK/subunit k, ATP5MJ/subunit j, ATP5F1C/subunit gamma, ATP5F1D/subunit delta, ATP5F1E/subunit epsilon, ATP5PF/subunit F6, ATP5PB/subunit b, ATP5PD/subunit d, ATP5PO/subunit OSCP. ATP synthase complex consists of a soluble F(1) head domain (subunits alpha(3) and beta(3)) - the catalytic core - and a membrane F(0) domain - the membrane proton channel (subunits c, a, 8, e, f, g, k and j). These two domains are linked by a central stalk (subunits gamma, delta, and epsilon) rotating inside the F1 region and a stationary peripheral stalk (subunits F6, b, d, and OSCP). Interacts with DNAJC30; interaction is direct.

It is found in the mitochondrion inner membrane. The enzyme catalyses H(+)(in) = H(+)(out). In terms of biological role, subunit a, of the mitochondrial membrane ATP synthase complex (F(1)F(0) ATP synthase or Complex V) that produces ATP from ADP in the presence of a proton gradient across the membrane which is generated by electron transport complexes of the respiratory chain. ATP synthase complex consist of a soluble F(1) head domain - the catalytic core - and a membrane F(1) domain - the membrane proton channel. These two domains are linked by a central stalk rotating inside the F(1) region and a stationary peripheral stalk. During catalysis, ATP synthesis in the catalytic domain of F(1) is coupled via a rotary mechanism of the central stalk subunits to proton translocation. With the subunit c (ATP5MC1), forms the proton-conducting channel in the F(0) domain, that contains two crucial half-channels (inlet and outlet) that facilitate proton movement from the mitochondrial intermembrane space (IMS) into the matrix. Protons are taken up via the inlet half-channel and released through the outlet half-channel, following a Grotthuss mechanism. This chain is ATP synthase F(0) complex subunit a, found in Gadus morhua (Atlantic cod).